Reading from the N-terminus, the 447-residue chain is Phosphoglucosamine mutase (447 aa).

The Phosphoserine intermediate role is filled by Ser102. Residues Ser102, Asp241, Asp243, and Asp245 each coordinate Mg(2+). A Phosphoserine modification is found at Ser102.

Belongs to the phosphohexose mutase family. Requires Mg(2+) as cofactor. Post-translationally, activated by phosphorylation.

The catalysed reaction is alpha-D-glucosamine 1-phosphate = D-glucosamine 6-phosphate. Functionally, catalyzes the conversion of glucosamine-6-phosphate to glucosamine-1-phosphate. The protein is Phosphoglucosamine mutase of Pseudomonas syringae pv. syringae (strain B728a).